We begin with the raw amino-acid sequence, 485 residues long: Caspid protein (485 aa).

N-linked (GlcNAc...) asparagine; by host glycans are attached at residues asparagine 5 and asparagine 178. The interval isoleucine 236–glutamine 262 is particle formation. Asparagine 430 carries an N-linked (GlcNAc...) asparagine; by host glycan. An oligomerization region spans residues threonine 453–leucine 478.

It belongs to the hepevirus capsid protein family. In terms of assembly, self-assembles to form the capsid. The capsid is dominated by dimers that define the 30 morphological units. Interacts with phosphorylated protein ORF3. Interacts with host TMEM134. Interacts with host ASGR1 and ASGR2; these interactions facilitate infection of host hepatocytes. Not N-glycosylated.

The protein resides in the virion. Its subcellular location is the host cytoplasm. It is found in the host endoplasmic reticulum. It localises to the host Golgi apparatus. The protein localises to the host cell surface. The protein resides in the host nucleus. In terms of biological role, forms an icosahedral capsid with a T=1 symmetry and a 34 nm diameter. The capsid is composed of 60 copies linked to each other. Binds to the 5' end of the genomic RNA to mediate genome encapsidation. Binds to heparin surface proteoglycans (HSPGs) to mediate viral entry. Additionally, the interactions with host ASGR1 and ASGR2 facilitate viral infection of hepatocytes. Inhibits IFN production by blocking host TBK1-induced IRF3 phosphorylation. The nuclear form probably modulates host gene expression. This is Caspid protein from Hepatitis E virus (isolate Rhesus/HT-4) (HEV).